The sequence spans 395 residues: Guanine nucleotide-binding protein subunit beta-5 (395 aa).

WD repeat units follow at residues 103 to 142 (GHGN…KEHA), 145 to 184 (MPCT…NENM), 193 to 234 (MHTN…QSFH), 236 to 278 (HGAD…QAFE), 279 to 318 (THES…EVAI), 320 to 362 (SKES…RVSI), and 365 to 394 (GHEN…LRVW).

Belongs to the WD repeat G protein beta family. In terms of assembly, component of a complex composed of RGS9 (isoform RGS9-1), GNB5 and RGS9BP; within this complex, the presence of GNB5 stabilizes both itself and RGS9 and increases RGS9 GTPase-activating protein (GAP) activity. Interacts with RGS7, forming the RGS7-GNB5 complex; within this complex, the presence of GNB5 increases RGS7 GTPase-activating protein (GAP) activity. Interacts with GPR158; promotes the GTPase activator activity of the RGS7-GNB5 complex in absence of glycine, in contrast GTPase activator activity of the RGS7-GNB5 complex is inhibited in presence of glycine. Interacts with RGS6. In terms of tissue distribution, isoform 1 is only detected in retina. Isoform 2 is detected in brain (at protein level). Isoform 2 is detected in brain.

Its subcellular location is the membrane. In terms of biological role, enhances GTPase-activating protein (GAP) activity of regulator of G protein signaling (RGS) proteins, such as RGS7 and RGS9, hence involved in the termination of the signaling initiated by the G protein coupled receptors (GPCRs) by accelerating the GTP hydrolysis on the G-alpha subunits, thereby promoting their inactivation. Increases RGS7 GTPase-activating protein (GAP) activity, thereby regulating mood and cognition. Increases RGS9 GTPase-activating protein (GAP) activity, hence contributes to the deactivation of G protein signaling initiated by D(2) dopamine receptors. May play an important role in neuronal signaling, including in the parasympathetic, but not sympathetic, control of heart rate. This Mus musculus (Mouse) protein is Guanine nucleotide-binding protein subunit beta-5 (Gnb5).